A 792-amino-acid chain; its full sequence is Protein SEY1 homolog 2 (792 aa).

The Cytoplasmic portion of the chain corresponds to 1 to 638 (MEQIITGDGA…NIKAQANREQ (638 aa)). The region spanning 28–245 (GVDYHTVAII…LKDYLFAEKS (218 aa)) is the GB1/RHD3-type G domain. GTP is bound at residue 38–45 (GPQSSGKS). Residues 639-659 (IPGWAWLATFLCSSNYIMKLL) form a helical membrane-spanning segment. Over 660–662 (ANP) the chain is Lumenal. A helical membrane pass occupies residues 663-683 (IFFALAVIIGGIYSILRMLGL). Residues 684 to 792 (QDVAKKTLLD…LTRTQSLEFM (109 aa)) lie on the Cytoplasmic side of the membrane. Positions 691-718 (LLDKFNSLLKNLTKDENEQEKEGEENEE) form a coiled coil. The interval 703-792 (TKDENEQEKE…LTRTQSLEFM (90 aa)) is disordered. Acidic residues predominate over residues 707–723 (NEQEKEGEENEEPEEDQ). Composition is skewed to polar residues over residues 739–751 (SVSQ…SIYK) and 764–774 (IPQTSPLGNND).

Belongs to the TRAFAC class dynamin-like GTPase superfamily. GB1/RHD3 GTPase family. RHD3 subfamily.

It is found in the endoplasmic reticulum membrane. Functionally, probable GTP-binding protein that may be involved in cell development. The sequence is that of Protein SEY1 homolog 2 from Trichomonas vaginalis (strain ATCC PRA-98 / G3).